A 311-amino-acid chain; its full sequence is Putative dihydroorotate dehydrogenase A (fumarate) (311 aa).

Substrate is bound by residues Lys-45, 69–73 (NSMGL), and Asn-128. 45-46 (KT) lines the FMN pocket. An FMN-binding site is contributed by Asn-128. The Nucleophile role is filled by Cys-131. Positions 165 and 193 each coordinate FMN. 194–195 (NS) provides a ligand contact to substrate. FMN contacts are provided by residues Gly-220, 248–249 (GG), and 270–271 (GT).

The protein belongs to the dihydroorotate dehydrogenase family. Type 1 subfamily. Homodimer. FMN serves as cofactor.

It localises to the cytoplasm. The enzyme catalyses (S)-dihydroorotate + fumarate = orotate + succinate. It participates in pyrimidine metabolism; UMP biosynthesis via de novo pathway. Catalyzes the conversion of dihydroorotate to orotate with fumarate as the electron acceptor. This is Putative dihydroorotate dehydrogenase A (fumarate) (pyrD) from Streptococcus pyogenes serotype M3 (strain SSI-1).